The following is a 204-amino-acid chain: Minor allergen Alt a 7 (204 aa).

A Flavodoxin-like domain is found at 5 to 195 (IAIVYYSMYG…NIAQAQGKAF (191 aa)).

The protein belongs to the WrbA family.

It localises to the cytoplasm. The sequence is that of Minor allergen Alt a 7 (ALTA7) from Alternaria alternata (Alternaria rot fungus).